The chain runs to 339 residues: MPPEKKRKTEPEDKAEVTQQENDVAESTTEPNNQTVTDSKEEPSVTEAALATTSSSSPPVLSASETAQPDTAATSQSSSTPPTSTSAAESAAAKARERAERFRALQARAKSSSQQNLKKATKESQRLQSDPSQLTALGRRHAIASHKLLKADIEDAGGDFERKRAWDWTVEESERWDKRMKKKEAHRDDTAFRDYNQQAEKSYKRQLRNMGGPDLERYTREKLAAIEKAAAAGTLEIVETEDGEMIAIDKDGTFFSTADSTQFAQHKPDKAAVDRLVADMRKAEEASLKKRRERMANNGDDADVTYINEKNKQFNQKLSRFYNKYTAEIRDSFERGTMV.

The tract at residues methionine 1–alanine 136 is disordered. Over residues arginine 7–glutamate 16 the composition is skewed to basic and acidic residues. A compositionally biased stretch (polar residues) spans valine 17–threonine 37. Over residues valine 45 to alanine 93 the composition is skewed to low complexity. A compositionally biased stretch (basic and acidic residues) spans lysine 94–arginine 103. Residues arginine 126 to threonine 135 are compositionally biased toward polar residues.

The protein belongs to the SYF2 family. As to quaternary structure, associated with the spliceosome.

It is found in the nucleus. Functionally, involved in pre-mRNA splicing. The protein is Pre-mRNA-splicing factor syf2 (msp-4) of Neurospora crassa (strain ATCC 24698 / 74-OR23-1A / CBS 708.71 / DSM 1257 / FGSC 987).